Consider the following 275-residue polypeptide: Lectin (275 aa).

An N-terminal signal peptide occupies residues 1–30; it reads MASLQTQMISFYLIFLSILLTTIFFFKVNS. 2 residues coordinate D-glucose: aspartate 111 and glycine 129. The Mn(2+) site is built by glutamate 149 and aspartate 151. Residues aspartate 151, phenylalanine 153, asparagine 155, and aspartate 159 each coordinate Ca(2+). Residues aspartate 159 and histidine 166 each coordinate Mn(2+). Positions 211–217 are excised as a propeptide; it reads NSLEEEN. D-glucose contacts are provided by glycine 246 and alanine 247. The propeptide occupies 270–275; sequence KQAADA.

The protein belongs to the leguminous lectin family. As to quaternary structure, heterotetramer of two alpha and two beta chains. Post-translationally, the mature form consists of two chains, alpha and beta, produced by cleavage of the immature protein. These remain cleaved, yet fold together to form one subunit.

In terms of biological role, D-mannose specific lectin. In Lens culinaris (Lentil), this protein is Lectin.